The chain runs to 176 residues: MADIAQKIRNTREDFEERIVEIRRTTKVTKGGKNLSFRVLAVVGNRNGKVGVGVGKAREVPDAIRKALSAARRNVFEVPIYNGTIPHEIVGRQDAAKVLLKPAAPGTGIISNGTVRAVVELAGIHNILTKTSGSTNPVVLAQATVNGLKNLLSLEKIAQLRDITPQEVIYGVKKEG.

The 64-residue stretch at 15–78 folds into the S5 DRBM domain; the sequence is FEERIVEIRR…SAARRNVFEV (64 aa).

The protein belongs to the universal ribosomal protein uS5 family. As to quaternary structure, part of the 30S ribosomal subunit. Contacts proteins S4 and S8.

Its function is as follows. With S4 and S12 plays an important role in translational accuracy. Located at the back of the 30S subunit body where it stabilizes the conformation of the head with respect to the body. This chain is Small ribosomal subunit protein uS5, found in Thermosipho africanus (strain TCF52B).